Reading from the N-terminus, the 162-residue chain is Endoribonuclease YbeY (162 aa).

Zn(2+) is bound by residues His128, His132, and His138.

The protein belongs to the endoribonuclease YbeY family. Zn(2+) serves as cofactor.

It is found in the cytoplasm. Its function is as follows. Single strand-specific metallo-endoribonuclease involved in late-stage 70S ribosome quality control and in maturation of the 3' terminus of the 16S rRNA. The polypeptide is Endoribonuclease YbeY (Lactococcus lactis subsp. lactis (strain IL1403) (Streptococcus lactis)).